Here is a 464-residue protein sequence, read N- to C-terminus: ATP synthase subunit beta 2 (464 aa).

147 to 154 (GGAGVGKT) is an ATP binding site.

This sequence belongs to the ATPase alpha/beta chains family. As to quaternary structure, F-type ATPases have 2 components, CF(1) - the catalytic core - and CF(0) - the membrane proton channel. CF(1) has five subunits: alpha(3), beta(3), gamma(1), delta(1), epsilon(1). CF(0) has four main subunits: a(1), b(1), b'(1) and c(9-12).

The protein localises to the cell inner membrane. The enzyme catalyses ATP + H2O + 4 H(+)(in) = ADP + phosphate + 5 H(+)(out). Produces ATP from ADP in the presence of a proton gradient across the membrane. The catalytic sites are hosted primarily by the beta subunits. The polypeptide is ATP synthase subunit beta 2 (Cereibacter sphaeroides (strain ATCC 17023 / DSM 158 / JCM 6121 / CCUG 31486 / LMG 2827 / NBRC 12203 / NCIMB 8253 / ATH 2.4.1.) (Rhodobacter sphaeroides)).